Reading from the N-terminus, the 149-residue chain is Transcription antitermination protein NusB (149 aa).

The protein belongs to the NusB family.

Involved in transcription antitermination. Required for transcription of ribosomal RNA (rRNA) genes. Binds specifically to the boxA antiterminator sequence of the ribosomal RNA (rrn) operons. This Acinetobacter baylyi (strain ATCC 33305 / BD413 / ADP1) protein is Transcription antitermination protein NusB.